Here is a 192-residue protein sequence, read N- to C-terminus: RNA pyrophosphohydrolase (192 aa).

Positions 6-149 constitute a Nudix hydrolase domain; that stretch reads GYRPNVGIVI…KKDVYRKVMK (144 aa). Positions 38-59 match the Nudix box motif; sequence GGINDNETAEQAMYRELYEEAG.

It belongs to the Nudix hydrolase family. RppH subfamily. It depends on a divalent metal cation as a cofactor.

Its function is as follows. Accelerates the degradation of transcripts by removing pyrophosphate from the 5'-end of triphosphorylated RNA, leading to a more labile monophosphorylated state that can stimulate subsequent ribonuclease cleavage. The protein is RNA pyrophosphohydrolase of Histophilus somni (strain 129Pt) (Haemophilus somnus).